An 87-amino-acid polypeptide reads, in one-letter code: Putative autophagy-related protein 8E (87 aa).

The segment covering 1–14 has biased composition (basic and acidic residues); it reads MEERRKEKGKEGRR. The tract at residues 1–30 is disordered; that stretch reads MEERRKEKGKEGRRGKATGHSVDKFSRSNL. A lipid anchor (Phosphatidylethanolamine amidated glycine) is attached at Gly-87.

Belongs to the ATG8 family. In terms of assembly, interacts with ATG4. In terms of processing, the C-terminal Gly is amidated with phosphatidylethanolamine by an activating system similar to that for ubiquitin.

It localises to the cytoplasmic vesicle. The protein localises to the autophagosome membrane. The protein resides in the vacuole membrane. Its subcellular location is the cytoplasm. It is found in the cytoskeleton. Its function is as follows. Ubiquitin-like modifier involved in autophagosomes formation. May mediate the delivery of the autophagosomes to the vacuole via the microtubule cytoskeleton. The sequence is that of Putative autophagy-related protein 8E (ATG8E) from Oryza sativa subsp. japonica (Rice).